Consider the following 689-residue polypeptide: Elongation factor G 1 (689 aa).

Residues 7-282 (DQVRTIGIIS…AVVDFLPSPL (276 aa)) enclose the tr-type G domain. Residues 16–23 (SHIDAGKT), 80–84 (DTPGH), and 134–137 (NKMD) each bind GTP.

The protein belongs to the TRAFAC class translation factor GTPase superfamily. Classic translation factor GTPase family. EF-G/EF-2 subfamily.

The protein resides in the cytoplasm. Catalyzes the GTP-dependent ribosomal translocation step during translation elongation. During this step, the ribosome changes from the pre-translocational (PRE) to the post-translocational (POST) state as the newly formed A-site-bound peptidyl-tRNA and P-site-bound deacylated tRNA move to the P and E sites, respectively. Catalyzes the coordinated movement of the two tRNA molecules, the mRNA and conformational changes in the ribosome. This is Elongation factor G 1 from Geobacter sulfurreducens (strain ATCC 51573 / DSM 12127 / PCA).